Reading from the N-terminus, the 1073-residue chain is ATP-dependent helicase/deoxyribonuclease subunit B (1073 aa).

Belongs to the helicase family. AddB/RexB type 2 subfamily. Heterodimer of AddA and RexB. It depends on Mg(2+) as a cofactor.

The heterodimer acts as both an ATP-dependent DNA helicase and an ATP-dependent, dual-direction single-stranded exonuclease. Recognizes the chi site generating a DNA molecule suitable for the initiation of homologous recombination. This subunit has 5' -&gt; 3' nuclease activity but not helicase activity. The chain is ATP-dependent helicase/deoxyribonuclease subunit B from Streptococcus equi subsp. zooepidemicus (strain MGCS10565).